A 626-amino-acid chain; its full sequence is Polygalacturonase 1 beta-like protein 3 (626 aa).

The signal sequence occupies residues 1 to 23; the sequence is MLKQFLLLQSFSFFLFNVVIVGG. One copy of the FXXY 1 repeat lies at 117 to 120; the sequence is FSVY. N-linked (GlcNAc...) asparagine glycosylation occurs at N124. FXXY repeat units lie at residues 125 to 128, 139 to 142, 153 to 156, 167 to 170, 181 to 184, 195 to 198, 209 to 212, 223 to 226, 238 to 241, 252 to 255, and 266 to 269; these read FTNY, FKNY, FRRY, FTVY, FNSY, FTAY, FKTY, FTSY, and FSNY. Residue N141 is glycosylated (N-linked (GlcNAc...) asparagine). N277 carries N-linked (GlcNAc...) asparagine glycosylation. FXXY repeat units follow at residues 280 to 283, 294 to 297, 308 to 311, 322 to 325, 336 to 339, 350 to 353, and 364 to 367; these read FTSY, FNNY, FANY, FSSY, FVNY, FTGY, and FKTY. The N-linked (GlcNAc...) asparagine glycan is linked to N370. 2 FXXY repeats span residues 373–376 and 383–386; these read FKDY and FAKY. N-linked (GlcNAc...) asparagine glycosylation is found at N387 and N465. The BURP domain occupies 411–625; it reads FFRESSLKEG…FENDMNWAIA (215 aa).

Expressed in flowers and stems. Detected in trichomes, guard cells, root vascular tissue, root hairs, pollen sacs, sepals and styles of pistils.

It localises to the secreted. The protein resides in the extracellular space. Its subcellular location is the apoplast. The protein localises to the cell wall. In terms of biological role, involved in cell size determination. May serve as a chaperone for expansins through the secretory pathway. The polypeptide is Polygalacturonase 1 beta-like protein 3 (Arabidopsis thaliana (Mouse-ear cress)).